A 935-amino-acid chain; its full sequence is Isoleucine--tRNA ligase (935 aa).

The short motif at 58–68 (PYANGSIHVGH) is the 'HIGH' region element. L-isoleucyl-5'-AMP is bound at residue E558. A 'KMSKS' region motif is present at residues 599–603 (KMSKS). K602 serves as a coordination point for ATP. 4 residues coordinate Zn(2+): C897, C900, C917, and C920.

It belongs to the class-I aminoacyl-tRNA synthetase family. IleS type 1 subfamily. As to quaternary structure, monomer. It depends on Zn(2+) as a cofactor.

The protein localises to the cytoplasm. It catalyses the reaction tRNA(Ile) + L-isoleucine + ATP = L-isoleucyl-tRNA(Ile) + AMP + diphosphate. Functionally, catalyzes the attachment of isoleucine to tRNA(Ile). As IleRS can inadvertently accommodate and process structurally similar amino acids such as valine, to avoid such errors it has two additional distinct tRNA(Ile)-dependent editing activities. One activity is designated as 'pretransfer' editing and involves the hydrolysis of activated Val-AMP. The other activity is designated 'posttransfer' editing and involves deacylation of mischarged Val-tRNA(Ile). The chain is Isoleucine--tRNA ligase from Francisella tularensis subsp. tularensis (strain SCHU S4 / Schu 4).